Here is a 277-residue protein sequence, read N- to C-terminus: Phosphoenolpyruvate synthase regulatory protein (277 aa).

157–164 lines the ADP pocket; it reads GVSRCGKT.

Belongs to the pyruvate, phosphate/water dikinase regulatory protein family. PSRP subfamily.

The enzyme catalyses [pyruvate, water dikinase] + ADP = [pyruvate, water dikinase]-phosphate + AMP + H(+). It catalyses the reaction [pyruvate, water dikinase]-phosphate + phosphate + H(+) = [pyruvate, water dikinase] + diphosphate. Bifunctional serine/threonine kinase and phosphorylase involved in the regulation of the phosphoenolpyruvate synthase (PEPS) by catalyzing its phosphorylation/dephosphorylation. This is Phosphoenolpyruvate synthase regulatory protein from Salmonella gallinarum (strain 287/91 / NCTC 13346).